A 223-amino-acid polypeptide reads, in one-letter code: MIYKACIRKRCGGVCVGEELKPEKIQEIRLGDCPICGGKGTLKAIQFIHRIPYFGEVMESTVVCERCGYRNSDVIILEEREPRLYEVKVEEEKDLFIRVVRSKSGTIELEELGIKIEPGPAAEGFVSNIEGVLERAKEVLLMARDFKEQENDREAVRRIDELLKYIEEVKEGKKPLTVRIMDPFGNSALIGEKVKSRKLTKEEIRKLSKGPYIVIEPDEVPQQ.

Residues 33-67 form a C4-type zinc finger; the sequence is CPICGGKGTLKAIQFIHRIPYFGEVMESTVVCERC.

It belongs to the ZPR1 family.

This is an uncharacterized protein from Pyrococcus horikoshii (strain ATCC 700860 / DSM 12428 / JCM 9974 / NBRC 100139 / OT-3).